The following is a 237-amino-acid chain: tRNA (guanine-N(7)-)-methyltransferase (237 aa).

S-adenosyl-L-methionine-binding residues include glutamate 67, glutamate 92, aspartate 119, and aspartate 141. Aspartate 141 is a catalytic residue. Residues lysine 145, aspartate 177, and 214-217 (TRYE) contribute to the substrate site.

Belongs to the class I-like SAM-binding methyltransferase superfamily. TrmB family.

The catalysed reaction is guanosine(46) in tRNA + S-adenosyl-L-methionine = N(7)-methylguanosine(46) in tRNA + S-adenosyl-L-homocysteine. It participates in tRNA modification; N(7)-methylguanine-tRNA biosynthesis. Functionally, catalyzes the formation of N(7)-methylguanine at position 46 (m7G46) in tRNA. The protein is tRNA (guanine-N(7)-)-methyltransferase of Jannaschia sp. (strain CCS1).